The following is a 361-amino-acid chain: Phospho-N-acetylmuramoyl-pentapeptide-transferase (361 aa).

10 consecutive transmembrane segments (helical) span residues 25–45 (RAVLASLTALGIGLALGPWVI), 73–93 (TMGGTLILLSIGITTLLWADL), 97–117 (YVWLLLAVLFGTGAIGFYDDW), 134–154 (MFWQSAIAIFAGIYLISTASL), 168–188 (VIYPFGVVGFCILTYFVIVGT), 200–220 (GLAAMPVVMVSAALAVFAYVA), 240–260 (VAVFCAAMAGACLAFLWFNAY), 264–284 (VFMGDVGALALGAALGTVAVI), 289–309 (IVLFVMGGLFVMEALSVMIQV), and 338–358 (QVVVRFWIITMMLVLAGLSTL).

It belongs to the glycosyltransferase 4 family. MraY subfamily. It depends on Mg(2+) as a cofactor.

The protein localises to the cell inner membrane. It catalyses the reaction UDP-N-acetyl-alpha-D-muramoyl-L-alanyl-gamma-D-glutamyl-meso-2,6-diaminopimeloyl-D-alanyl-D-alanine + di-trans,octa-cis-undecaprenyl phosphate = di-trans,octa-cis-undecaprenyl diphospho-N-acetyl-alpha-D-muramoyl-L-alanyl-D-glutamyl-meso-2,6-diaminopimeloyl-D-alanyl-D-alanine + UMP. It functions in the pathway cell wall biogenesis; peptidoglycan biosynthesis. In terms of biological role, catalyzes the initial step of the lipid cycle reactions in the biosynthesis of the cell wall peptidoglycan: transfers peptidoglycan precursor phospho-MurNAc-pentapeptide from UDP-MurNAc-pentapeptide onto the lipid carrier undecaprenyl phosphate, yielding undecaprenyl-pyrophosphoryl-MurNAc-pentapeptide, known as lipid I. The polypeptide is Phospho-N-acetylmuramoyl-pentapeptide-transferase (Laribacter hongkongensis (strain HLHK9)).